The chain runs to 98 residues: Cell division topological specificity factor (98 aa).

This sequence belongs to the MinE family.

Its function is as follows. Prevents the cell division inhibition by proteins MinC and MinD at internal division sites while permitting inhibition at polar sites. This ensures cell division at the proper site by restricting the formation of a division septum at the midpoint of the long axis of the cell. The protein is Cell division topological specificity factor of Moorella thermoacetica (strain ATCC 39073 / JCM 9320).